The chain runs to 668 residues: Bifunctional polymyxin resistance protein ArnA (668 aa).

Residues 1 to 307 form a formyltransferase ArnAFT region; the sequence is MSNKAVVFAY…ELGLVDGSLL (307 aa). H106 acts as the Proton donor; for formyltransferase activity in catalysis. (6R)-10-formyltetrahydrofolate contacts are provided by residues R116 and 138–142; that span reads VKRAD. The interval 317 to 668 is dehydrogenase ArnADH; that stretch reads RRTRVLILGV…IADRAKQEAR (352 aa). Residues D350 and 371 to 372 each bind NAD(+); that span reads DI. UDP-alpha-D-glucuronate contacts are provided by residues A396, Y401, and 435 to 436; that span reads TS. E437 functions as the Proton acceptor; for decarboxylase activity in the catalytic mechanism. UDP-alpha-D-glucuronate is bound by residues R463, N494, 528–537, and Y615; that span reads RLFDGGEQKR. Catalysis depends on R621, which acts as the Proton donor; for decarboxylase activity.

It in the N-terminal section; belongs to the Fmt family. UDP-L-Ara4N formyltransferase subfamily. This sequence in the C-terminal section; belongs to the NAD(P)-dependent epimerase/dehydratase family. UDP-glucuronic acid decarboxylase subfamily. Homohexamer, formed by a dimer of trimers.

The catalysed reaction is UDP-alpha-D-glucuronate + NAD(+) = UDP-beta-L-threo-pentopyranos-4-ulose + CO2 + NADH. The enzyme catalyses UDP-4-amino-4-deoxy-beta-L-arabinose + (6R)-10-formyltetrahydrofolate = UDP-4-deoxy-4-formamido-beta-L-arabinose + (6S)-5,6,7,8-tetrahydrofolate + H(+). Its pathway is nucleotide-sugar biosynthesis; UDP-4-deoxy-4-formamido-beta-L-arabinose biosynthesis; UDP-4-deoxy-4-formamido-beta-L-arabinose from UDP-alpha-D-glucuronate: step 1/3. It functions in the pathway nucleotide-sugar biosynthesis; UDP-4-deoxy-4-formamido-beta-L-arabinose biosynthesis; UDP-4-deoxy-4-formamido-beta-L-arabinose from UDP-alpha-D-glucuronate: step 3/3. It participates in bacterial outer membrane biogenesis; lipopolysaccharide biosynthesis. In terms of biological role, bifunctional enzyme that catalyzes the oxidative decarboxylation of UDP-glucuronic acid (UDP-GlcUA) to UDP-4-keto-arabinose (UDP-Ara4O) and the addition of a formyl group to UDP-4-amino-4-deoxy-L-arabinose (UDP-L-Ara4N) to form UDP-L-4-formamido-arabinose (UDP-L-Ara4FN). The modified arabinose is attached to lipid A and is required for resistance to polymyxin and cationic antimicrobial peptides. This is Bifunctional polymyxin resistance protein ArnA from Pseudomonas fluorescens (strain ATCC BAA-477 / NRRL B-23932 / Pf-5).